We begin with the raw amino-acid sequence, 228 residues long: 7-cyano-7-deazaguanine synthase (228 aa).

16 to 26 is a binding site for ATP; that stretch reads FSGGQDSTTCL. Cys-193, Cys-201, Cys-204, and Cys-207 together coordinate Zn(2+).

This sequence belongs to the QueC family. It depends on Zn(2+) as a cofactor.

It carries out the reaction 7-carboxy-7-deazaguanine + NH4(+) + ATP = 7-cyano-7-deazaguanine + ADP + phosphate + H2O + H(+). It participates in purine metabolism; 7-cyano-7-deazaguanine biosynthesis. Functionally, catalyzes the ATP-dependent conversion of 7-carboxy-7-deazaguanine (CDG) to 7-cyano-7-deazaguanine (preQ(0)). This Pasteurella multocida (strain Pm70) protein is 7-cyano-7-deazaguanine synthase.